We begin with the raw amino-acid sequence, 174 residues long: Small ribosomal subunit protein uS12m (174 aa).

It belongs to the universal ribosomal protein uS12 family. In terms of assembly, component of the mitochondrial small ribosomal subunit (mt-SSU). Mature N.crassa 74S mitochondrial ribosomes consist of a small (37S) and a large (54S) subunit. The 37S small subunit contains a 16S ribosomal RNA (16S mt-rRNA) and 32 different proteins. The 54S large subunit contains a 23S rRNA (23S mt-rRNA) and 42 different proteins. uS12m forms part of the decoding center of the mt-SSU.

The protein resides in the mitochondrion. Component of the mitochondrial ribosome (mitoribosome), a dedicated translation machinery responsible for the synthesis of mitochondrial genome-encoded proteins, including at least some of the essential transmembrane subunits of the mitochondrial respiratory chain. The mitoribosomes are attached to the mitochondrial inner membrane and translation products are cotranslationally integrated into the membrane. In Neurospora crassa (strain ATCC 24698 / 74-OR23-1A / CBS 708.71 / DSM 1257 / FGSC 987), this protein is Small ribosomal subunit protein uS12m (mrps12).